Consider the following 72-residue polypeptide: Translation initiation factor IF-1 (72 aa).

The S1-like domain occupies 1 to 72; that stretch reads MAKEDNFELE…SKGRITYRAR (72 aa).

Belongs to the IF-1 family. In terms of assembly, component of the 30S ribosomal translation pre-initiation complex which assembles on the 30S ribosome in the order IF-2 and IF-3, IF-1 and N-formylmethionyl-tRNA(fMet); mRNA recruitment can occur at any time during PIC assembly.

The protein resides in the cytoplasm. One of the essential components for the initiation of protein synthesis. Stabilizes the binding of IF-2 and IF-3 on the 30S subunit to which N-formylmethionyl-tRNA(fMet) subsequently binds. Helps modulate mRNA selection, yielding the 30S pre-initiation complex (PIC). Upon addition of the 50S ribosomal subunit IF-1, IF-2 and IF-3 are released leaving the mature 70S translation initiation complex. The chain is Translation initiation factor IF-1 from Saccharophagus degradans (strain 2-40 / ATCC 43961 / DSM 17024).